We begin with the raw amino-acid sequence, 151 residues long: Small ribosomal subunit protein uS15 (151 aa).

Belongs to the universal ribosomal protein uS15 family.

The protein is Small ribosomal subunit protein uS15 (RPS13) of Glycine max (Soybean).